The sequence spans 262 residues: MAPGFTISFVNKTIIVTGGNRGIGLAFTRAVAAAGANVAVIYRSAKDAVEVTEKVGKEFGVKTKAYQCDVSNTDIVTKTIQQIDADLGAISGLIANAGVSVVKPATELTHEDFKFVYDVNVFGVFNTCRAVAKLWLQKQQKGSIVVTSSMSSQIINQSSLNGSLTQVFYNSSKAACSNLVKGLAAEWASAGIRVNALSPGYVNTDQTAHMDKKIRDHQASNIPLNRFAQPEEMTGQAILLLSDHATYMTGGEYFIDGGQLIW.

Residues I23, D69, N96, and R129 each contribute to the NADP(+) site. S149 (proton donor) is an active-site residue. Positions 169, 173, 202, 204, and 206 each coordinate NADP(+). Y169 functions as the Proton acceptor in the catalytic mechanism. K173 acts as the Lowers pKa of active site Tyr in catalysis.

The protein belongs to the short-chain dehydrogenases/reductases (SDR) family. Homotetramer.

It carries out the reaction D-mannitol + NADP(+) = D-fructose + NADPH + H(+). The sequence is that of NADP-dependent mannitol dehydrogenase (mtdH) from Agaricus bisporus (White button mushroom).